The primary structure comprises 523 residues: Fidgetin-like protein 1 (523 aa).

The tract at residues 114–154 (PVQQAVKSRPEGQFPESRNNSTKKIDAQQYSSESSSQSGFG) is disordered. The span at 141 to 151 (QQYSSESSSQS) shows a compositional bias: low complexity. ATP is bound by residues alanine 253 and 293–298 (GTGKTL).

This sequence belongs to the AAA ATPase family. Hexamer. Mg(2+) serves as cofactor.

The enzyme catalyses ATP + H2O = ADP + phosphate + H(+). The protein is Fidgetin-like protein 1 of Drosophila melanogaster (Fruit fly).